Here is a 641-residue protein sequence, read N- to C-terminus: Chaperone protein DnaK (641 aa).

Phosphothreonine; by autocatalysis is present on threonine 200. Residues 602–611 (AASSKASAAS) show a composition bias toward low complexity. Positions 602–641 (AASSKASAASSPPPPPGAGGQKSDVIDAEFEKVDKDKPQA) are disordered. Basic and acidic residues predominate over residues 630-641 (EFEKVDKDKPQA).

Belongs to the heat shock protein 70 family.

In terms of biological role, acts as a chaperone. The protein is Chaperone protein DnaK of Methylacidiphilum infernorum (isolate V4) (Methylokorus infernorum (strain V4)).